Reading from the N-terminus, the 113-residue chain is Large ribosomal subunit protein bL19 (113 aa).

The protein belongs to the bacterial ribosomal protein bL19 family.

In terms of biological role, this protein is located at the 30S-50S ribosomal subunit interface and may play a role in the structure and function of the aminoacyl-tRNA binding site. The chain is Large ribosomal subunit protein bL19 from Corynebacterium kroppenstedtii (strain DSM 44385 / JCM 11950 / CIP 105744 / CCUG 35717).